The following is an 877-amino-acid chain: MSQETPASTTEAQIKNKRRISPFWLLPFIALMIASWLIWDSYQDRGNTVTIDFMSADGIVPGRTPVRYQGVEVGTVQDISLSDDLRKIEVKVSIKSDMKDALREETQFWLVTPKASLAGVSGLDALVGGNYIGMMPGKGKEQDHFVALDTQPKYRLDNGDLMIHLQAPDLGSLNSGSLVYFRKIPVGKVYDYAINPNKQGVVIDVLIERRFTDLVKKGSRFWNVSGVDANVSISGAKVKLESLAALVNGAIAFDSPEESKPAEAEDTFGLYEDLAHSQRGVIIKLELPSGAGLTADSTPLMYQGLEVGQLTKLDLNPGGKVTGEMTVDPSVVTLLRENTRIELRNPKLSLSDANLSALLTGKTFELVPGDGEPRKEFVVVPGEKALLHEPDVLTLTLTAPESYGIDAGQPLILHGVQVGQVIDRKLTSKGVTFTVAIEPQHRELVKGDSKFVVNSRVDVKVGLDGVEFLGASASEWINGGIRILPGDKGEMKASYPLYANLEKALENSLSDLPTTTVSLSAETLPDVQAGSVVLYRKFEVGEVITVRPRANAFDIDLHIKPEYRNLLTSNSVFWAEGGAKVQLNGSGLTVQASPLSRALKGAISFDNLSGASASQRKGDKRILYASETAARAVGGQITLHAFDAGKLAVGMPIRYLGIDIGQIQTLDLITARNEVQAKAVLYPEYVQTFARGGTRFSVVTPQISAAGVEHLDTILQPYINVEPGRGNPRRDFELQEATITDSRYLDGLSIIVEAPEAGSLGIGTPVLFRGLEVGTVTGMTLGTLSDRVMIAMRISKRYQHLVRNNSVFWLASGYSLDFGLTGGVVKTGTFNQFIRGGIAFATPPGTPLAPKAQEGKHFLLQESEPKEWREWGTALPK.

At 1-19 the chain is on the cytoplasmic side; the sequence is MSQETPASTTEAQIKNKRR. A helical membrane pass occupies residues 20–40; that stretch reads ISPFWLLPFIALMIASWLIWD. Residues 41–877 are Periplasmic-facing; the sequence is SYQDRGNTVT…WREWGTALPK (837 aa). MCE/MlaD stretches follow at residues 46–149, 160–272, 279–382, 391–499, 515–625, 634–737, and 746–862; these read GNTV…VALD, DLMI…GLYE, RGVI…VVPG, DVLT…PLYA, TTVS…ILYA, GGQI…LQEA, and DGLS…LLQE.

Belongs to the PqiB family. As to quaternary structure, homohexamer. May interact with LetA in the inner membrane. May also interact with partners in the outer membrane.

It localises to the cell inner membrane. Its function is as follows. Forms a tunnel that spans the entire periplasmic space. Is probably involved in the transport of lipids between the inner membrane and the outer membrane through the tunnel. Forms a dynamic tunnel sufficiently long to mediate lipid transport directly between the two membranes without the need for a shuttle protein. Binds phospholipids. Lipids bind inside the tunnel. Required for outer membrane homeostasis. Contributes to membrane integrity. This Escherichia coli (strain K12) protein is Lipophilic envelope-spanning tunnel protein B.